The chain runs to 573 residues: Arylsulfatase I (573 aa).

An N-terminal signal peptide occupies residues Met1 to Ala23. Ca(2+)-binding residues include Asp56, Asp57, and Cys94. The active-site Nucleophile is the Cys94. The residue at position 94 (Cys94) is a 3-oxoalanine (Cys). A substrate-binding site is contributed by Lys148. The active site involves His150. Residue His240 coordinates substrate. 2 N-linked (GlcNAc...) asparagine glycosylation sites follow: Asn277 and Asn289. 2 residues coordinate Ca(2+): Asp298 and Asn299. Lys316 lines the substrate pocket. 2 N-linked (GlcNAc...) asparagine glycosylation sites follow: Asn467 and Asn497. Residues Phe516–Lys550 form a disordered region. The segment covering Ser526 to Glu536 has biased composition (acidic residues).

The protein belongs to the sulfatase family. It depends on Ca(2+) as a cofactor. In terms of processing, the oxidation of Cys-94 residue to 3-oxoalanine (also known as C(alpha)-formylglycine) by SUMF1/Sulfatase-modifying factor 1, seems critical for catalytic activity.

The protein resides in the secreted. Its subcellular location is the endoplasmic reticulum. Functionally, displays arylsulfatase activity at neutral pH, when co-expressed with SUMF1; arylsulfatase activity is measured in the secretion medium of retinal cell line, but no activity is recorded when measured in cell extracts. This is Arylsulfatase I (ARSI) from Canis lupus familiaris (Dog).